Consider the following 326-residue polypeptide: Vitamin B12 import system permease protein BtuC (326 aa).

The next 9 membrane-spanning stretches (helical) occupy residues 15–35 (WLLCLSVLMLLALLLSLCAGE), 61–81 (LAVLLVGAALAISGAVMQALF), 88–108 (PGLLGVSNGAGVGLIAAVLLG), 112–132 (LPNWALGLCAIAGALIITLIL), 146–166 (LLAGVALGIICSALMTWAIYF), 184–204 (GGVDWRQSWLMLALIPVLLWI), 240–260 (GWMVGVSVALAGAIGFIGLVI), 274–294 (VLLPGCALAGASALLLADIVA), and 302–322 (ELPIGVVTATLGAPVFIWLLL).

Belongs to the binding-protein-dependent transport system permease family. FecCD subfamily. In terms of assembly, the complex is composed of two ATP-binding proteins (BtuD), two transmembrane proteins (BtuC) and a solute-binding protein (BtuF).

Its subcellular location is the cell inner membrane. Functionally, part of the ABC transporter complex BtuCDF involved in vitamin B12 import. Involved in the translocation of the substrate across the membrane. The chain is Vitamin B12 import system permease protein BtuC from Escherichia coli O9:H4 (strain HS).